We begin with the raw amino-acid sequence, 387 residues long: Palmitoyltransferase ZDHHC16A (387 aa).

2 helical membrane-spanning segments follow: residues 73–93 and 106–126; these read WFGM…VFIA and SPGW…MIVF. In terms of domain architecture, DHHC spans 150 to 200; that stretch reads SVCKKCIIPKPARSHHCGICKTCILKMDHHCPWLNNCVGHFNHRYFFSFCL. Residue cysteine 180 is the S-palmitoyl cysteine intermediate of the active site. The next 3 membrane-spanning stretches (helical) occupy residues 198-218, 236-256, and 281-301; these read FCLF…HLFI, GVPV…GVAG, and VIYM…LTLW.

The protein belongs to the DHHC palmitoyltransferase family. In terms of tissue distribution, expressed in the central nervous system (CNS). Expressed in the developing forebrain, and especially in the telencephalon.

The protein localises to the endoplasmic reticulum membrane. The enzyme catalyses L-cysteinyl-[protein] + hexadecanoyl-CoA = S-hexadecanoyl-L-cysteinyl-[protein] + CoA. Palmitoyl acyltransferase that mediates palmitoylation of proteins and is required during embryonic heart development. Involved in the proliferation of neural stem cells by regulating the FGF/ERK pathway. Involved in the proliferation of neural stem cells by regulating the FGF/ERK pathway. The sequence is that of Palmitoyltransferase ZDHHC16A from Danio rerio (Zebrafish).